The sequence spans 302 residues: Putative 2-dehydro-3-deoxy-D-gluconate aldolase YagE (302 aa).

Active-site charge relay system residues include Ser49 and Tyr112. The active-site Proton donor is the Tyr138. Residue Lys167 is the Schiff-base intermediate with substrate of the active site.

The protein belongs to the DapA family. In terms of assembly, a dimer of dimers.

The protein localises to the cytoplasm. It catalyses the reaction 2-dehydro-3-deoxy-D-gluconate = D-glyceraldehyde + pyruvate. It carries out the reaction 2-dehydro-3-deoxy-D-arabinonate = glycolaldehyde + pyruvate. Its function is as follows. Catalyzes the formation of 2-keto-3-deoxy-gluconate (KDG) from pyruvate and glyceraldehyde. May also function as a 2-dehydro-3-deoxy-D-pentonate aldolase. Overexpression leads to increased growth (over 2 hours) in the presence of the antibiotics norfloxacin, ampicillin and streptomycin. The sequence is that of Putative 2-dehydro-3-deoxy-D-gluconate aldolase YagE (yagE) from Escherichia coli (strain K12).